A 326-amino-acid chain; its full sequence is Protoheme IX farnesyltransferase (326 aa).

8 helical membrane-spanning segments follow: residues 35–55 (LIPL…GWPL), 60–80 (LVCT…LNCL), 106–126 (SAFI…VSGV), 129–149 (LAAG…TALL), 157–177 (IVIG…AATG), 185–205 (WLFA…ALLL), 242–262 (GFGV…LLPF), and 283–303 (AKGL…LLIL).

The protein belongs to the UbiA prenyltransferase family. Protoheme IX farnesyltransferase subfamily.

The protein localises to the cell inner membrane. The enzyme catalyses heme b + (2E,6E)-farnesyl diphosphate + H2O = Fe(II)-heme o + diphosphate. It functions in the pathway porphyrin-containing compound metabolism; heme O biosynthesis; heme O from protoheme: step 1/1. Converts heme B (protoheme IX) to heme O by substitution of the vinyl group on carbon 2 of heme B porphyrin ring with a hydroxyethyl farnesyl side group. In Parasynechococcus marenigrum (strain WH8102), this protein is Protoheme IX farnesyltransferase.